A 233-amino-acid chain; its full sequence is Biosynthetic peptidoglycan transglycosylase (233 aa).

Residues L4–L24 form a helical membrane-spanning segment.

This sequence belongs to the glycosyltransferase 51 family.

The protein localises to the cell inner membrane. The enzyme catalyses [GlcNAc-(1-&gt;4)-Mur2Ac(oyl-L-Ala-gamma-D-Glu-L-Lys-D-Ala-D-Ala)](n)-di-trans,octa-cis-undecaprenyl diphosphate + beta-D-GlcNAc-(1-&gt;4)-Mur2Ac(oyl-L-Ala-gamma-D-Glu-L-Lys-D-Ala-D-Ala)-di-trans,octa-cis-undecaprenyl diphosphate = [GlcNAc-(1-&gt;4)-Mur2Ac(oyl-L-Ala-gamma-D-Glu-L-Lys-D-Ala-D-Ala)](n+1)-di-trans,octa-cis-undecaprenyl diphosphate + di-trans,octa-cis-undecaprenyl diphosphate + H(+). It functions in the pathway cell wall biogenesis; peptidoglycan biosynthesis. Its function is as follows. Peptidoglycan polymerase that catalyzes glycan chain elongation from lipid-linked precursors. The sequence is that of Biosynthetic peptidoglycan transglycosylase from Cupriavidus metallidurans (strain ATCC 43123 / DSM 2839 / NBRC 102507 / CH34) (Ralstonia metallidurans).